Reading from the N-terminus, the 405-residue chain is Putative polysaccharide ligase RT0347 (405 aa).

10 helical membrane-spanning segments follow: residues 23 to 43 (IAATVLFFLLIIVITELISFI), 77 to 97 (LFIAWCFISCLFTIHPINSLV), 120 to 140 (ILYLKNSLILGIITAILLFFI), 156 to 178 (FGLYMLDRGCALLSITTWVVIII), 201 to 221 (ISDSLASFVGFSIGGIIFILA), 227 to 247 (IFFKLITISLITGSLLFPIIA), 270 to 290 (LFIWHFVANKIIIKPILGYGF), 322 to 342 (ILQITLELGILGLALFLCLVY), 353 to 375 (ISNFRAASYSCFINYYIIGMISY), and 377 to 397 (IWQTWWILSGIWILVLMKLLV).

This sequence belongs to the O-antigen ligase family.

It localises to the membrane. The protein is Putative polysaccharide ligase RT0347 of Rickettsia typhi (strain ATCC VR-144 / Wilmington).